The chain runs to 537 residues: Ribonuclease III domain-containing protein RNC1, chloroplastic (537 aa).

A chloroplast-targeting transit peptide spans Met1 to Cys51. RNase III domains lie at Leu141 to Gly283 and Glu415 to Gly515.

In terms of assembly, interacts with RNA. Part of large ribonucleo-protein particles that contain CAF1 and/or CAF2.

Its subcellular location is the plastid. It localises to the chloroplast. Binds specific group II introns in chloroplasts and facilitates their splicing. Acts on both subgroup IIA and subgroup IIB introns. The substrates of the subgroup II also require the CRM domain proteins CAF1 or CAF2. Binds both single-stranded and double-stranded RNA non-specifically, but lacks endonuclease activity. Required for plastid ribosome biogenesis. The polypeptide is Ribonuclease III domain-containing protein RNC1, chloroplastic (Arabidopsis thaliana (Mouse-ear cress)).